A 784-amino-acid chain; its full sequence is ATP-dependent 6-phosphofructokinase, platelet type (784 aa).

Methionine 1 bears the N-acetylmethionine mark. The segment at 1–399 is N-terminal catalytic PFK domain 1; that stretch reads MDADDSRAPK…NLNTYKRLAI (399 aa). Phosphoserine occurs at positions 6, 12, and 21. Residues glycine 34, 97 to 98, and 127 to 130 each bind ATP; these read RC and GDGS. Aspartate 128 is a Mg(2+) binding site. A Phosphoserine modification is found at serine 142. Substrate contacts are provided by residues 173–175, arginine 210, 217–219, glutamate 273, arginine 301, and 307–310; these read SID, MGR, and HVQR. Aspartate 175 acts as the Proton acceptor in catalysis. At serine 386 the chain carries Phosphoserine. Lysine 395 bears the N6-acetyllysine mark. Residues 400 to 411 are interdomain linker; the sequence is KLPDDQIPKTNC. The interval 412–784 is C-terminal regulatory PFK domain 2; it reads NVAVINVGAP…QLEHVQPWSV (373 aa). Arginine 481 provides a ligand contact to beta-D-fructose 2,6-bisphosphate. Lysine 486 is modified (N6-acetyllysine). Beta-D-fructose 2,6-bisphosphate contacts are provided by residues 538 to 542, arginine 576, 583 to 585, and glutamate 639; these read TVSNN and MGG. A glycan (O-linked (GlcNAc) serine) is linked at serine 540. A Phosphotyrosine modification is found at tyrosine 651. Beta-D-fructose 2,6-bisphosphate-binding positions include arginine 665 and 671–674; that span reads HMQQ. At lysine 688 the chain carries N6-acetyllysine. Arginine 744 serves as a coordination point for beta-D-fructose 2,6-bisphosphate. Serine 783 is subject to Phosphoserine.

This sequence belongs to the phosphofructokinase type A (PFKA) family. ATP-dependent PFK group I subfamily. Eukaryotic two domain clade 'E' sub-subfamily. In terms of assembly, homo- and heterotetramers. Phosphofructokinase (PFK) enzyme functions as a tetramer composed of different combinations of 3 types of subunits, called PFKM (M), PFKL (L) and PFKP (P). The composition of the PFK tetramer differs according to the tissue type it is present in. The kinetic and regulatory properties of the tetrameric enzyme are dependent on the subunit composition, hence can vary across tissues. Interacts with ATG4B; promoting phosphorylation of ATG4B. Mg(2+) is required as a cofactor. In terms of processing, glcNAcylation decreases enzyme activity. Phosphorylation at Ser-386 promotes interaction with ATG4B.

Its subcellular location is the cytoplasm. It catalyses the reaction beta-D-fructose 6-phosphate + ATP = beta-D-fructose 1,6-bisphosphate + ADP + H(+). It functions in the pathway carbohydrate degradation; glycolysis; D-glyceraldehyde 3-phosphate and glycerone phosphate from D-glucose: step 3/4. With respect to regulation, allosterically activated by ADP, AMP, or fructose 2,6-bisphosphate, and allosterically inhibited by ATP or citrate. Catalyzes the phosphorylation of D-fructose 6-phosphate to fructose 1,6-bisphosphate by ATP, the first committing step of glycolysis. The polypeptide is ATP-dependent 6-phosphofructokinase, platelet type (PFKP) (Pongo abelii (Sumatran orangutan)).